Consider the following 112-residue polypeptide: Osmotically-inducible putative lipoprotein OsmE (112 aa).

A signal peptide spans 1–20 (MNKNMAGILSAAAVLTMLAG). Cys21 is lipidated: N-palmitoyl cysteine. Residue Cys21 is the site of S-diacylglycerol cysteine attachment.

Its subcellular location is the cell inner membrane. This chain is Osmotically-inducible putative lipoprotein OsmE (osmE), found in Escherichia coli O157:H7.